Reading from the N-terminus, the 437-residue chain is Ribosomal protein uS12 methylthiotransferase RimO (437 aa).

The 116-residue stretch at Thr-9–Ala-124 folds into the MTTase N-terminal domain. [4Fe-4S] cluster-binding residues include Cys-18, Cys-56, Cys-90, Cys-151, Cys-155, and Cys-158. A Radical SAM core domain is found at Thr-137–Glu-367. In terms of domain architecture, TRAM spans Glu-370–Lys-437.

Belongs to the methylthiotransferase family. RimO subfamily. The cofactor is [4Fe-4S] cluster.

The protein resides in the cytoplasm. It catalyses the reaction L-aspartate(89)-[ribosomal protein uS12]-hydrogen + (sulfur carrier)-SH + AH2 + 2 S-adenosyl-L-methionine = 3-methylsulfanyl-L-aspartate(89)-[ribosomal protein uS12]-hydrogen + (sulfur carrier)-H + 5'-deoxyadenosine + L-methionine + A + S-adenosyl-L-homocysteine + 2 H(+). In terms of biological role, catalyzes the methylthiolation of an aspartic acid residue of ribosomal protein uS12. The chain is Ribosomal protein uS12 methylthiotransferase RimO from Cytophaga hutchinsonii (strain ATCC 33406 / DSM 1761 / CIP 103989 / NBRC 15051 / NCIMB 9469 / D465).